A 40-amino-acid chain; its full sequence is Dolichyl-diphosphooligosaccharide--protein glycosyltransferase subunit 4 (40 aa).

The Lumenal segment spans residues 1–4 (MITD). A helical membrane pass occupies residues 5-25 (VQLAIFSNVLGVFLFLLVVAY). Over 26–40 (HYINANTGKSSIKTK) the chain is Cytoplasmic.

This sequence belongs to the OST4 family. As to quaternary structure, component of the oligosaccharyltransferase (OST) complex.

It is found in the endoplasmic reticulum membrane. Functionally, subunit of the oligosaccharyl transferase (OST) complex that catalyzes the initial transfer of a defined glycan (Glc(3)Man(9)GlcNAc(2) in eukaryotes) from the lipid carrier dolichol-pyrophosphate to an asparagine residue within an Asn-X-Ser/Thr consensus motif in nascent polypeptide chains, the first step in protein N-glycosylation. N-glycosylation occurs cotranslationally and the complex associates with the Sec61 complex at the channel-forming translocon complex that mediates protein translocation across the endoplasmic reticulum (ER). All subunits are required for a maximal enzyme activity. The sequence is that of Dolichyl-diphosphooligosaccharide--protein glycosyltransferase subunit 4 from Drosophila virilis (Fruit fly).